Here is a 306-residue protein sequence, read N- to C-terminus: UPF0282 protein Pars_1056 (306 aa).

Belongs to the UPF0282 family.

The sequence is that of UPF0282 protein Pars_1056 from Pyrobaculum arsenaticum (strain DSM 13514 / JCM 11321 / PZ6).